A 202-amino-acid polypeptide reads, in one-letter code: Putative transmembrane protein ORF202 (202 aa).

Transmembrane regions (helical) follow at residues 13–33 (AIAF…FHYI), 40–60 (VFYL…LFLG), 87–107 (YYPV…ISVF), 156–176 (YGAL…HSLS), and 177–197 (LTAF…DLWA).

It is found in the host membrane. This chain is Putative transmembrane protein ORF202, found in Acidianus filamentous virus 2 (isolate Italy/Pozzuoli) (AFV-2).